We begin with the raw amino-acid sequence, 76 residues long: Sea anemone sodium channel inhibitor type I (76 aa).

The signal sequence occupies residues 1–19 (MNRMLIIFVVVTVFGLASG). A propeptide spanning residues 20-30 (LGPNMPAPDLA) is cleaved from the precursor. 3 cysteine pairs are disulfide-bonded: C37–C72, C39–C60, and C53–C73.

Belongs to the sea anemone sodium channel inhibitory toxin family. Type I subfamily. Expressed in acontia, a specialised envenomation structure laden with batteries of venom-containing nematocysts found only in the superfamily Metridioidea.

The protein resides in the secreted. The protein localises to the nematocyst. In terms of biological role, may affect sodium channels (Nav). The protein is Sea anemone sodium channel inhibitor type I of Calliactis polypus (Hermit crab anemone).